A 213-amino-acid polypeptide reads, in one-letter code: Ras-like protein rasX (213 aa).

16–23 is a binding site for GTP; sequence GDGGVGKT. The short motif at 38–46 is the Effector region element; the sequence is YDPTIEDSY. GTP is bound by residues 63-67 and 122-125; these read DTAGQ and NKSD. The residue at position 210 (Cys210) is a Cysteine methyl ester. Cys210 carries S-geranylgeranyl cysteine lipidation. Residues 211–213 constitute a propeptide, removed in mature form; the sequence is KMM.

Belongs to the small GTPase superfamily. Ras family.

It is found in the cell membrane. It carries out the reaction GTP + H2O = GDP + phosphate + H(+). Functionally, ras proteins bind GDP/GTP and possess intrinsic GTPase activity. The sequence is that of Ras-like protein rasX (rasX) from Dictyostelium discoideum (Social amoeba).